The primary structure comprises 417 residues: MTELVTGKAFPYVVVTGIAMTTALATDAETTWKLLLDRQSGIRTLDDPFVEEFDLPVRIGGHLLEEFDHQLTRIELRRMGYLQRMSTVLSRRLWENAGSPEVDTNRLMVSIGTGLGSAEELVFSYDDMRARGMKAVSPLTVQKYMPNGAAAAVGLERHAKAGVMTPVSACASGAEAIARAWQQIVLGEADAAICGGVETRIEAVPIAGFAQMRIVMSTNNDDPAGACRPFDRDRDGFVFGEGGALLLIETEEHAKARGANILARIMGASITSDGFHMVAPDPNGERAGHAITRAIQLAGLAPGDIDHVNAHATGTQVGDLAEGRAINNALGGNRPAVYAPKSALGHSVGAVGAVESILTVLALRDQVIPPTLNLVNLDPEIDLDVVAGEPRPGNYRYAINNSFGFGGHNVAIAFGRY.

Residues 10–416 enclose the Ketosynthase family 3 (KS3) domain; it reads FPYVVVTGIA…GHNVAIAFGR (407 aa). Catalysis depends on for beta-ketoacyl synthase activity residues cysteine 170, histidine 311, and histidine 346.

It belongs to the thiolase-like superfamily. Beta-ketoacyl-ACP synthases family.

It localises to the cytoplasm. It carries out the reaction an ultra-long-chain di-unsaturated fatty acyl-[ACP] + malonyl-[ACP] + H(+) = a 3-oxo-ultra-long-chain di-unsaturated fatty acyl-[ACP] + holo-[ACP] + CO2. It participates in lipid metabolism; mycolic acid biosynthesis. Its function is as follows. Part of the mycobacterial fatty acid elongation system FAS-II, which is involved in mycolic acid biosynthesis. Catalyzes the elongation of long chain acyl-ACP substrates by the addition of two carbons from malonyl-ACP to an acyl acceptor. Involved in extension of the mycolate chains to full lengths and produces longer chain multiunsaturated hydrocarbons averaging 54 carbons in length. In Mycobacterium bovis (strain ATCC BAA-935 / AF2122/97), this protein is 3-oxoacyl-[acyl-carrier-protein] synthase 2 (kasB).